Consider the following 317-residue polypeptide: Probable cell division protein WhiA (317 aa).

A DNA-binding region (H-T-H motif) is located at residues 276 to 310; that stretch reads TLKELGEMVSGGKISKSGINHRLRKIDDIAEKLRA.

This sequence belongs to the WhiA family.

Its function is as follows. Involved in cell division and chromosome segregation. In Bacillus thuringiensis (strain Al Hakam), this protein is Probable cell division protein WhiA.